Reading from the N-terminus, the 151-residue chain is Transcriptional repressor NrdR (151 aa).

The segment at 3-34 is a zinc-finger region; that stretch reads CPFCHNDQSRVIDSRVIDSGSAIRRRRECTQC. One can recognise an ATP-cone domain in the interval 46 to 136; it reads LLVVKRNGLT…VYKSFESADD (91 aa).

This sequence belongs to the NrdR family. Requires Zn(2+) as cofactor.

Functionally, negatively regulates transcription of bacterial ribonucleotide reductase nrd genes and operons by binding to NrdR-boxes. The sequence is that of Transcriptional repressor NrdR from Corynebacterium diphtheriae (strain ATCC 700971 / NCTC 13129 / Biotype gravis).